Here is a 337-residue protein sequence, read N- to C-terminus: Probable dual-specificity RNA methyltransferase RlmN (337 aa).

The active-site Proton acceptor is the E88. One can recognise a Radical SAM core domain in the interval 94-324; the sequence is SEKRLTVCVS…VRYSRGLATD (231 aa). An intrachain disulfide couples C101 to C327. [4Fe-4S] cluster-binding residues include C108, C112, and C115. S-adenosyl-L-methionine is bound by residues 155–156, S185, 208–210, and N284; these read GE and SLH. The active-site S-methylcysteine intermediate is C327.

This sequence belongs to the radical SAM superfamily. RlmN family. It depends on [4Fe-4S] cluster as a cofactor.

Its subcellular location is the cytoplasm. The catalysed reaction is adenosine(2503) in 23S rRNA + 2 reduced [2Fe-2S]-[ferredoxin] + 2 S-adenosyl-L-methionine = 2-methyladenosine(2503) in 23S rRNA + 5'-deoxyadenosine + L-methionine + 2 oxidized [2Fe-2S]-[ferredoxin] + S-adenosyl-L-homocysteine. It carries out the reaction adenosine(37) in tRNA + 2 reduced [2Fe-2S]-[ferredoxin] + 2 S-adenosyl-L-methionine = 2-methyladenosine(37) in tRNA + 5'-deoxyadenosine + L-methionine + 2 oxidized [2Fe-2S]-[ferredoxin] + S-adenosyl-L-homocysteine. Specifically methylates position 2 of adenine 2503 in 23S rRNA and position 2 of adenine 37 in tRNAs. In Microcystis aeruginosa (strain NIES-843 / IAM M-2473), this protein is Probable dual-specificity RNA methyltransferase RlmN.